The chain runs to 211 residues: Glycerol-3-phosphate acyltransferase (211 aa).

The next 5 helical transmembrane spans lie at 5–25, 58–78, 80–100, 112–132, and 138–158; these read ALGM…ILFC, VLVF…ALGV, PLYL…PVFF, LGAI…TWLL, and GYSS…VWWF.

It belongs to the PlsY family. Probably interacts with PlsX.

Its subcellular location is the cell inner membrane. It carries out the reaction an acyl phosphate + sn-glycerol 3-phosphate = a 1-acyl-sn-glycero-3-phosphate + phosphate. The protein operates within lipid metabolism; phospholipid metabolism. Catalyzes the transfer of an acyl group from acyl-phosphate (acyl-PO(4)) to glycerol-3-phosphate (G3P) to form lysophosphatidic acid (LPA). This enzyme utilizes acyl-phosphate as fatty acyl donor, but not acyl-CoA or acyl-ACP. The polypeptide is Glycerol-3-phosphate acyltransferase (Pectobacterium atrosepticum (strain SCRI 1043 / ATCC BAA-672) (Erwinia carotovora subsp. atroseptica)).